A 498-amino-acid chain; its full sequence is Type II secretion system protein E (498 aa).

Residue 261–268 (GPTGSGKS) coordinates ATP. Zn(2+) contacts are provided by C394, C397, C425, and C428.

Belongs to the GSP E family. Forms homooligomers; most probably hexamers. Interacts with OutL/GspL. Zn(2+) serves as cofactor.

It localises to the cell inner membrane. It carries out the reaction ATP + H2O + cellular proteinSide 1 = ADP + phosphate + cellular proteinSide 2.. In terms of biological role, ATPase component of the type II secretion system required for the energy-dependent secretion of extracellular factors such as proteases and toxins from the periplasm. Acts as a molecular motor to provide the energy that is required for assembly of the pseudopilus and the extrusion of substrates generated in the cytoplasm. The polypeptide is Type II secretion system protein E (outE) (Pectobacterium carotovorum subsp. carotovorum (Erwinia carotovora subsp. carotovora)).